Here is a 568-residue protein sequence, read N- to C-terminus: Proline--tRNA ligase (568 aa).

The protein belongs to the class-II aminoacyl-tRNA synthetase family. ProS type 1 subfamily. In terms of assembly, homodimer.

The protein localises to the cytoplasm. The catalysed reaction is tRNA(Pro) + L-proline + ATP = L-prolyl-tRNA(Pro) + AMP + diphosphate. Catalyzes the attachment of proline to tRNA(Pro) in a two-step reaction: proline is first activated by ATP to form Pro-AMP and then transferred to the acceptor end of tRNA(Pro). As ProRS can inadvertently accommodate and process non-cognate amino acids such as alanine and cysteine, to avoid such errors it has two additional distinct editing activities against alanine. One activity is designated as 'pretransfer' editing and involves the tRNA(Pro)-independent hydrolysis of activated Ala-AMP. The other activity is designated 'posttransfer' editing and involves deacylation of mischarged Ala-tRNA(Pro). The misacylated Cys-tRNA(Pro) is not edited by ProRS. The polypeptide is Proline--tRNA ligase (Halothermothrix orenii (strain H 168 / OCM 544 / DSM 9562)).